The primary structure comprises 791 residues: Probable potassium transporter 11 (791 aa).

Over 1–49 (MASLSESEGTNRGSMWELDQNLDQPMDEEASRLKNMYREKKFSSLLLLR) the chain is Cytoplasmic. The chain crosses the membrane as a helical span at residues 50 to 70 (LAFQSLGVVFGDLGTSPLYVF). Residues 71–87 (YNAFPHGVDDEEDVIGA) lie on the Extracellular side of the membrane. Residues 88 to 108 (LSLIIYTLTLIPLLKYVFVVL) form a helical membrane-spanning segment. The Cytoplasmic segment spans residues 109–175 (RANDNGQGGT…EAHAYKRNCL (67 aa)). The helical transmembrane segment at 176–196 (LIVVLIGTCTAIGDGILTPAI) threads the bilayer. Over 197–215 (SVLSASGGIKVQNPNMSTD) the chain is Extracellular. An N-linked (GlcNAc...) asparagine glycan is attached at Asn211. Residues 216–236 (VVVIVSVIILIGLFSMQHYGT) form a helical membrane-spanning segment. Residues 237 to 238 (DK) are Cytoplasmic-facing. A helical transmembrane segment spans residues 239–259 (VGWLFAPIVLLWFILIGSVGA). Topologically, residues 260–289 (LNIHKYKGSVLKAYNPVYIYRYFQRRNSDS) are extracellular. A helical transmembrane segment spans residues 290 to 310 (WASLGGIMLSITGTEALFADL). Topologically, residues 311–315 (CHFPV) are cytoplasmic. Residues 316–338 (FAIQIAFTLIVFPCLLLAYTGQA) traverse the membrane as a helical segment. At 339-359 (AYIIAHKDHVADAFYRSIPDS) the chain is on the extracellular side. The helical transmembrane segment at 360-380 (IYWPAFVIATAAAIVASQATI) threads the bilayer. Topologically, residues 381-411 (SATYSIIKQALALGCFPRVKIVHTSKKFLGQ) are cytoplasmic. Residues 412 to 432 (IYIPDINWVLLILCIAVTAGF) traverse the membrane as a helical segment. The Extracellular portion of the chain corresponds to 433–444 (KNQSQIGNAYGT). An N-linked (GlcNAc...) asparagine glycan is attached at Asn434. The chain crosses the membrane as a helical span at residues 445–465 (AVVIVMLVTTFLMVPIMLLVW). Residues 466-468 (KSH) lie on the Cytoplasmic side of the membrane. A helical transmembrane segment spans residues 469–489 (WILVVTFIVLSLMVEIPYFSA). At 490 to 496 (CLLKIDQ) the chain is on the extracellular side. The helical transmembrane segment at 497–517 (GGWVPLVIATAFFIIMYVWHF) threads the bilayer. Residues 518-791 (CTVKRYEFEM…LLNVGQIYYI (274 aa)) are Cytoplasmic-facing.

The protein belongs to the HAK/KUP transporter (TC 2.A.72.3) family.

The protein resides in the membrane. High-affinity potassium transporter. The chain is Probable potassium transporter 11 from Oryza sativa subsp. japonica (Rice).